The following is a 492-amino-acid chain: Ketol-acid reductoisomerase (NADP(+)) (492 aa).

A KARI N-terminal Rossmann domain is found at 14 to 208; it reads LDQLGRCRFM…GGHKAGVLES (195 aa). NADP(+)-binding positions include 45–48, Arg68, Arg76, Ser78, and 108–110; these read CGAQ and DKQ. The active site involves His132. Gly158 is a binding site for NADP(+). KARI C-terminal knotted domains lie at 209-344 and 345-485; these read SFVA…NAPK and YDGK…MTDM. Mg(2+)-binding residues include Asp217, Glu221, Glu389, and Glu393. Ser414 is a substrate binding site.

Belongs to the ketol-acid reductoisomerase family. Mg(2+) is required as a cofactor.

The catalysed reaction is (2R)-2,3-dihydroxy-3-methylbutanoate + NADP(+) = (2S)-2-acetolactate + NADPH + H(+). The enzyme catalyses (2R,3R)-2,3-dihydroxy-3-methylpentanoate + NADP(+) = (S)-2-ethyl-2-hydroxy-3-oxobutanoate + NADPH + H(+). The protein operates within amino-acid biosynthesis; L-isoleucine biosynthesis; L-isoleucine from 2-oxobutanoate: step 2/4. It participates in amino-acid biosynthesis; L-valine biosynthesis; L-valine from pyruvate: step 2/4. Functionally, involved in the biosynthesis of branched-chain amino acids (BCAA). Catalyzes an alkyl-migration followed by a ketol-acid reduction of (S)-2-acetolactate (S2AL) to yield (R)-2,3-dihydroxy-isovalerate. In the isomerase reaction, S2AL is rearranged via a Mg-dependent methyl migration to produce 3-hydroxy-3-methyl-2-ketobutyrate (HMKB). In the reductase reaction, this 2-ketoacid undergoes a metal-dependent reduction by NADPH to yield (R)-2,3-dihydroxy-isovalerate. The sequence is that of Ketol-acid reductoisomerase (NADP(+)) from Haemophilus influenzae (strain 86-028NP).